Reading from the N-terminus, the 1682-residue chain is Calmodulin-binding transcription activator 1 (1682 aa).

A DNA-binding region (CG-1) is located at residues 63 to 188 (KCSSLPKERH…YLNVPAIEDC (126 aa)). The short motif at 112 to 119 (RKKVKYRK) is the Nuclear localization signal element. Disordered regions lie at residues 284–375 (RIIS…MVDS) and 599–622 (SSFS…FLQD). The segment covering 302-327 (EVQHNDVSEGKHEPSHGRSTSREKRN) has biased composition (basic and acidic residues). Polar residues-rich tracts occupy residues 337–367 (HQNS…SGLN) and 599–618 (SSFS…SPSF). The IPT/TIG domain maps to 877 to 955 (DYSPEWSYPE…ISNSVVFEYK (79 aa)). The segment at 992–1020 (MAEMTGSQQHKQASGGGGSGSGSGSGAGG) is disordered. The segment covering 1005–1020 (SGGGGSGSGSGSGAGG) has biased composition (gly residues). ANK repeat units lie at residues 1066 to 1095 (RGMT…KHAD), 1111 to 1141 (FSCT…AISI), and 1145 to 1174 (LGRL…DEQA). Disordered stretches follow at residues 1217-1249 (ASTN…KKHK) and 1267-1318 (LSLE…SASQ). Polar residues predominate over residues 1268-1291 (SLEQPNIRKQSPRSKQPSPETISP). Residues 1308–1318 (ETAASQASASQ) show a composition bias toward low complexity. IQ domains follow at residues 1549–1585 (QEVA…AAIL), 1586–1608 (IQSK…AAVL), and 1609–1631 (IQNF…TAVI).

This sequence belongs to the CAMTA family. As to quaternary structure, may interact with calmodulin.

It is found in the nucleus. Its subcellular location is the cytoplasm. Transcriptional activator. In Mus musculus (Mouse), this protein is Calmodulin-binding transcription activator 1.